We begin with the raw amino-acid sequence, 684 residues long: Glycine--tRNA ligase beta subunit (684 aa).

This sequence belongs to the class-II aminoacyl-tRNA synthetase family. Tetramer of two alpha and two beta subunits.

It localises to the cytoplasm. The catalysed reaction is tRNA(Gly) + glycine + ATP = glycyl-tRNA(Gly) + AMP + diphosphate. This is Glycine--tRNA ligase beta subunit from Pseudomonas aeruginosa (strain LESB58).